Here is a 391-residue protein sequence, read N- to C-terminus: MFGTALSSSATKVLLLGSGELGKEVAIECQRLGFEVIAVDRYLNAPAMQVAHRSYAIDMLDANALEEVINKEQPDFVVPEIEAIATDKLVELEKQGLNVVPTANATKLTMNREGIRRLAAEELQLPTSPYRFVDSYEELVEAVKFVGMPCVIKPVMSSSGKGQSVIKTEADIRTSWDYAQDGGRSGAGRVIVEGFVDFDYEISLLTVRAVDGVHFCAPIGHRQEDGDYRESWQPQVMTEAALKQAQNAAEKVVNALGGYGLFGVELFIKGDNIYFNEVSPRPHDTGLVTLISQEMSEFALHVRAFTGMPINQVTQYGPSASSVILGQGTSTNIRFDGLTEALSQPQTQIKLFGKPEIDGRRRLGVAITRRDNLETAIEDAVTASNKVQVIY.

Residues 20–21 (EL) and E80 each bind N(1)-(5-phospho-beta-D-ribosyl)glycinamide. Residues R112, K153, 158-163 (SSGKGQ), 193-196 (EGFV), and E201 each bind ATP. In terms of domain architecture, ATP-grasp spans 117–306 (RLAAEELQLP…EFALHVRAFT (190 aa)). E265 and E277 together coordinate Mg(2+). N(1)-(5-phospho-beta-D-ribosyl)glycinamide contacts are provided by residues D284, K354, and 361–362 (RR).

Belongs to the PurK/PurT family. As to quaternary structure, homodimer.

It carries out the reaction N(1)-(5-phospho-beta-D-ribosyl)glycinamide + formate + ATP = N(2)-formyl-N(1)-(5-phospho-beta-D-ribosyl)glycinamide + ADP + phosphate + H(+). Its pathway is purine metabolism; IMP biosynthesis via de novo pathway; N(2)-formyl-N(1)-(5-phospho-D-ribosyl)glycinamide from N(1)-(5-phospho-D-ribosyl)glycinamide (formate route): step 1/1. Involved in the de novo purine biosynthesis. Catalyzes the transfer of formate to 5-phospho-ribosyl-glycinamide (GAR), producing 5-phospho-ribosyl-N-formylglycinamide (FGAR). Formate is provided by PurU via hydrolysis of 10-formyl-tetrahydrofolate. The sequence is that of Formate-dependent phosphoribosylglycinamide formyltransferase from Aliivibrio fischeri (strain ATCC 700601 / ES114) (Vibrio fischeri).